The following is a 418-amino-acid chain: UDP-N-acetylglucosamine 1-carboxyvinyltransferase (418 aa).

K22–N23 is a phosphoenolpyruvate binding site. Residue R91 participates in UDP-N-acetyl-alpha-D-glucosamine binding. Catalysis depends on C115, which acts as the Proton donor. C115 bears the 2-(S-cysteinyl)pyruvic acid O-phosphothioketal mark. UDP-N-acetyl-alpha-D-glucosamine is bound by residues D305 and I327.

Belongs to the EPSP synthase family. MurA subfamily.

The protein resides in the cytoplasm. It catalyses the reaction phosphoenolpyruvate + UDP-N-acetyl-alpha-D-glucosamine = UDP-N-acetyl-3-O-(1-carboxyvinyl)-alpha-D-glucosamine + phosphate. It participates in cell wall biogenesis; peptidoglycan biosynthesis. Its function is as follows. Cell wall formation. Adds enolpyruvyl to UDP-N-acetylglucosamine. This Aeromonas salmonicida (strain A449) protein is UDP-N-acetylglucosamine 1-carboxyvinyltransferase.